Consider the following 560-residue polypeptide: Dihydroxy-acid dehydratase (560 aa).

The segment at 1–20 (MGDNLKKRSSMTTDGDNRAP) is disordered. [2Fe-2S] cluster is bound at residue cysteine 52. Aspartate 84 contacts Mg(2+). Residue cysteine 125 coordinates [2Fe-2S] cluster. Residues aspartate 126 and lysine 127 each contribute to the Mg(2+) site. Lysine 127 is subject to N6-carboxylysine. Cysteine 197 lines the [2Fe-2S] cluster pocket. Glutamate 448 contributes to the Mg(2+) binding site. Serine 474 serves as the catalytic Proton acceptor.

This sequence belongs to the IlvD/Edd family. In terms of assembly, homodimer. [2Fe-2S] cluster serves as cofactor. The cofactor is Mg(2+).

The enzyme catalyses (2R)-2,3-dihydroxy-3-methylbutanoate = 3-methyl-2-oxobutanoate + H2O. It catalyses the reaction (2R,3R)-2,3-dihydroxy-3-methylpentanoate = (S)-3-methyl-2-oxopentanoate + H2O. Its pathway is amino-acid biosynthesis; L-isoleucine biosynthesis; L-isoleucine from 2-oxobutanoate: step 3/4. The protein operates within amino-acid biosynthesis; L-valine biosynthesis; L-valine from pyruvate: step 3/4. In terms of biological role, functions in the biosynthesis of branched-chain amino acids. Catalyzes the dehydration of (2R,3R)-2,3-dihydroxy-3-methylpentanoate (2,3-dihydroxy-3-methylvalerate) into 2-oxo-3-methylpentanoate (2-oxo-3-methylvalerate) and of (2R)-2,3-dihydroxy-3-methylbutanoate (2,3-dihydroxyisovalerate) into 2-oxo-3-methylbutanoate (2-oxoisovalerate), the penultimate precursor to L-isoleucine and L-valine, respectively. In Leptospira interrogans serogroup Icterohaemorrhagiae serovar copenhageni (strain Fiocruz L1-130), this protein is Dihydroxy-acid dehydratase.